A 340-amino-acid chain; its full sequence is HPr kinase/phosphorylase (340 aa).

Active-site residues include His-153 and Lys-174. 168–175 (GNSGLGKS) contacts ATP. Ser-175 serves as a coordination point for Mg(2+). Asp-192 (proton acceptor; for phosphorylation activity. Proton donor; for dephosphorylation activity) is an active-site residue. Residues 216–225 (MEIRGLGVVD) form an important for the catalytic mechanism of both phosphorylation and dephosphorylation region. Glu-217 is a binding site for Mg(2+). The active site involves Arg-258. The segment at 279 to 284 (PINPGK) is important for the catalytic mechanism of dephosphorylation.

This sequence belongs to the HPrK/P family. As to quaternary structure, homohexamer. Requires Mg(2+) as cofactor.

The catalysed reaction is [HPr protein]-L-serine + ATP = [HPr protein]-O-phospho-L-serine + ADP + H(+). It carries out the reaction [HPr protein]-O-phospho-L-serine + phosphate + H(+) = [HPr protein]-L-serine + diphosphate. Catalyzes the ATP- as well as the pyrophosphate-dependent phosphorylation of a specific serine residue in HPr, a phosphocarrier protein of the phosphoenolpyruvate-dependent sugar phosphotransferase system (PTS). HprK/P also catalyzes the pyrophosphate-producing, inorganic phosphate-dependent dephosphorylation (phosphorolysis) of seryl-phosphorylated HPr (P-Ser-HPr). The protein is HPr kinase/phosphorylase of Prosthecochloris aestuarii (strain DSM 271 / SK 413).